The primary structure comprises 1032 residues: Protein transport protein Sec24D (1032 aa).

A disordered region spans residues 1-260 (MSQQGYVATP…GPPQPQKKLD (260 aa)). Residues 102-133 (PSAQSSYPGPISTSSVTQLGSQLSAMQINSYG) are compositionally biased toward polar residues. Residues 198–212 (GPPPPNAQYQPPPLP) show a composition bias toward pro residues. Residue S266 is modified to Phosphoserine. 4 residues coordinate Zn(2+): C363, C366, C385, and C388. Residues 363–388 (CNRCKAYMCPFMQFIEGGRRYQCGFC) form a zinc finger-like region. The stretch at 901–974 (MLPAAVRCSE…PYSQQLRMIM (74 aa)) is one Gelsolin-like repeat.

The protein belongs to the SEC23/SEC24 family. SEC24 subfamily. In terms of assembly, COPII is composed of at least five proteins: the Sec23/24 complex, the Sec13/31 complex and Sar1. Interacts with TMED2 and TMED10. Interacts with CNIH4. Interacts with GOSR2 (via IxM motif) and STX5 (via IxM motif); recruits GOSR2 and STX5 into COPII-coated vesicles. Interacts with KCNA3; this interaction is reduced in the presence of KCNE4. In terms of tissue distribution, ubiquitously expressed, with higher amounts in placenta, pancreas, heart and liver.

Its subcellular location is the cytoplasmic vesicle. The protein localises to the COPII-coated vesicle membrane. The protein resides in the endoplasmic reticulum membrane. It localises to the cytoplasm. It is found in the cytosol. In terms of biological role, component of the coat protein complex II (COPII) which promotes the formation of transport vesicles from the endoplasmic reticulum (ER). The coat has two main functions, the physical deformation of the endoplasmic reticulum membrane into vesicles and the selection of cargo molecules for their transport to the Golgi complex. Plays a central role in cargo selection within the COPII complex and together with SEC24C may have a different specificity compared to SEC24A and SEC24B. May more specifically package GPI-anchored proteins through the cargo receptor TMED10. May also be specific for IxM motif-containing cargos like the SNAREs GOSR2 and STX5. The polypeptide is Protein transport protein Sec24D (Homo sapiens (Human)).